A 510-amino-acid chain; its full sequence is NAD(P)H-quinone oxidoreductase subunit 2, chloroplastic (510 aa).

The next 12 helical transmembrane spans lie at 24–44 (LLLF…GLIL), 59–79 (WFYF…LFRW), 99–119 (IFQF…VEYI), 124–144 (MAIT…MFLC), 149–169 (LITI…LSGY), 183–203 (YLLM…WLYG), 229–249 (ISIA…PAPF), 295–315 (WHLL…LIAI), 323–343 (MLAY…IVGD), 347–367 (GYAS…GTFA), 395–415 (ALSS…AGFF), and 418–438 (LHLF…IGLL).

Belongs to the complex I subunit 2 family. As to quaternary structure, NDH is composed of at least 16 different subunits, 5 of which are encoded in the nucleus.

It localises to the plastid. Its subcellular location is the chloroplast thylakoid membrane. It catalyses the reaction a plastoquinone + NADH + (n+1) H(+)(in) = a plastoquinol + NAD(+) + n H(+)(out). The enzyme catalyses a plastoquinone + NADPH + (n+1) H(+)(in) = a plastoquinol + NADP(+) + n H(+)(out). In terms of biological role, NDH shuttles electrons from NAD(P)H:plastoquinone, via FMN and iron-sulfur (Fe-S) centers, to quinones in the photosynthetic chain and possibly in a chloroplast respiratory chain. The immediate electron acceptor for the enzyme in this species is believed to be plastoquinone. Couples the redox reaction to proton translocation, and thus conserves the redox energy in a proton gradient. The chain is NAD(P)H-quinone oxidoreductase subunit 2, chloroplastic from Yucca glauca (Soapweed yucca).